An 882-amino-acid polypeptide reads, in one-letter code: Leucine--tRNA ligase (882 aa).

The 'HIGH' region signature appears at 43–53; it reads PYPSGRIHMGH. The 'KMSKS' region signature appears at 634–638; sequence KMSKS. ATP is bound at residue lysine 637.

This sequence belongs to the class-I aminoacyl-tRNA synthetase family.

It localises to the cytoplasm. It catalyses the reaction tRNA(Leu) + L-leucine + ATP = L-leucyl-tRNA(Leu) + AMP + diphosphate. This is Leucine--tRNA ligase from Rhodopseudomonas palustris (strain BisB18).